A 382-amino-acid chain; its full sequence is (R,R)-butanediol dehydrogenase (382 aa).

Cysteine 39 serves as a coordination point for Zn(2+). Serine 63 is modified (phosphoserine). Residues histidine 73, cysteine 103, cysteine 120, cysteine 123, cysteine 131, and glutamate 173 each contribute to the Zn(2+) site.

Belongs to the zinc-containing alcohol dehydrogenase family. As to quaternary structure, homodimer. Zn(2+) serves as cofactor.

The protein localises to the cytoplasm. The catalysed reaction is (R,R)-butane-2,3-diol + NAD(+) = (R)-acetoin + NADH + H(+). In terms of biological role, NAD-dependent (R,R)-butanediol dehydrogenase which catalyzes oxidation of (R,R)-butane-2,3-diol to (3R)-acetoin, of meso-butanediol to (3S)-acetoin, and reduction of acetoin. Allows the use of 2,3-butanediol as an aerobic carbon source. The protein is (R,R)-butanediol dehydrogenase (BDH1) of Saccharomyces cerevisiae (strain ATCC 204508 / S288c) (Baker's yeast).